Here is a 122-residue protein sequence, read N- to C-terminus: Large ribosomal subunit protein uL14 (122 aa).

The protein belongs to the universal ribosomal protein uL14 family. In terms of assembly, part of the 50S ribosomal subunit. Forms a cluster with proteins L3 and L19. In the 70S ribosome, L14 and L19 interact and together make contacts with the 16S rRNA in bridges B5 and B8.

Binds to 23S rRNA. Forms part of two intersubunit bridges in the 70S ribosome. This is Large ribosomal subunit protein uL14 from Streptomyces griseus subsp. griseus (strain JCM 4626 / CBS 651.72 / NBRC 13350 / KCC S-0626 / ISP 5235).